Reading from the N-terminus, the 167-residue chain is Phosphopantetheine adenylyltransferase (167 aa).

Residue serine 11 coordinates substrate. ATP is bound by residues 11–12 (SF) and histidine 19. Residues lysine 43, threonine 76, and arginine 90 each coordinate substrate. ATP-binding positions include 91–93 (GIR), glutamate 101, and 126–132 (YDALSST).

The protein belongs to the bacterial CoaD family. As to quaternary structure, homohexamer. Mg(2+) serves as cofactor.

Its subcellular location is the cytoplasm. The catalysed reaction is (R)-4'-phosphopantetheine + ATP + H(+) = 3'-dephospho-CoA + diphosphate. It functions in the pathway cofactor biosynthesis; coenzyme A biosynthesis; CoA from (R)-pantothenate: step 4/5. Its function is as follows. Reversibly transfers an adenylyl group from ATP to 4'-phosphopantetheine, yielding dephospho-CoA (dPCoA) and pyrophosphate. The protein is Phosphopantetheine adenylyltransferase of Lacticaseibacillus paracasei (strain ATCC 334 / BCRC 17002 / CCUG 31169 / CIP 107868 / KCTC 3260 / NRRL B-441) (Lactobacillus paracasei).